The primary structure comprises 669 residues: MGANSSSISELPDNEYLKKLSGAEPISENDPFWNQLLSFSFTTPTNSADLKLLEEATVSVCKSLVEKNPRTGNLGSLIKVFLSRTKELKISAECQNHLFIWQAHNALFIICCLLKVFISRMSEEELQLHFTYEDKTPGSYGTECEDLIEELLCCLIQLIVEIPLLDITYSISLEAVTTLIVFLSCQLFHKEILRESLIHKYLMRGRCLPYTSRLVKTLLYNFIRQERSPPPGSHVFQQQTDGGGLLYGIASGVATGLWTVFTLGGVGSKATPQLDQCSPLANQSLLLLLVLANLTDAPDTPNPYRQAIMSFKNTQDSSAFSSSHPHVFQINFNSLYTALCEQQKSDQATLLLYMLLHQNGNVRTYVLARTDIENLVLPILEILYHVEERNSHHVYMALIILLILTEDDGFNRSIHEVILKNITWYAERVLTEISLGSLLILVVIRTIQYNMTRTRDKYLHTNCLAALANMSAQFRSLHQYAAQRIISLFSLLSKKHNKVLEQATQSLRGSLDSNDSPLPDYAQDLNVIEEVIRMMLEIINSCLTNSLHHNPNLVYALLYKRDLFEQFRTHPSFQDIMQNIDLVISFFSSRLEHAGAELSVERVLEIIKQGAVALPKDRLRKFPELKFKYVEEEQPEEFFIPYVWSLVYNAAVALYWNPRDIQLFTMDSG.

G2 carries N-myristoyl glycine lipidation.

It belongs to the dymeclin family. Post-translationally, myristoylated in vitro; myristoylation is not essential for protein targeting to Golgi compartment.

Its subcellular location is the cytoplasm. It is found in the golgi apparatus. In terms of biological role, necessary for correct organization of Golgi apparatus. This Gallus gallus (Chicken) protein is Dymeclin (DYM).